The sequence spans 149 residues: UPF0178 protein CPR_2251 (149 aa).

This sequence belongs to the UPF0178 family.

In Clostridium perfringens (strain SM101 / Type A), this protein is UPF0178 protein CPR_2251.